The following is a 1126-amino-acid chain: Ubiquitin carboxyl-terminal hydrolase 16/45 (1126 aa).

A compositionally biased stretch (basic and acidic residues) spans M1 to S15. The disordered stretch occupies residues M1–S44. Positions P32 to S44 are enriched in polar residues. The UBP-type zinc-finger motif lies at A43–P181. Residues C45, H47, C70, C73, C111, C114, C119, H126, H130, H139, C152, and C155 each contribute to the Zn(2+) site. Low complexity-rich tracts occupy residues G215–A229 and S254–T264. The segment at G215–T264 is disordered. The active-site Nucleophile is C315. 3 disordered regions span residues K513–K547, A570–S762, and E795–K833. Residues P524–T539 are compositionally biased toward low complexity. A compositionally biased stretch (basic residues) spans Q586–K598. Composition is skewed to low complexity over residues S599–L614 and T646–S657. Residues A674–A701 show a composition bias toward polar residues. Residues G705 to D718 are compositionally biased toward basic and acidic residues. Positions A730–S762 are enriched in low complexity. The segment covering G807–E816 has biased composition (basic and acidic residues). Over residues Q821–A830 the composition is skewed to low complexity. Residue H984 is the Proton acceptor of the active site. A disordered region spans residues L1037–V1089. A compositionally biased stretch (low complexity) spans F1046–A1086.

Belongs to the peptidase C19 family.

It catalyses the reaction Thiol-dependent hydrolysis of ester, thioester, amide, peptide and isopeptide bonds formed by the C-terminal Gly of ubiquitin (a 76-residue protein attached to proteins as an intracellular targeting signal).. In terms of biological role, involved in the regulation of DNA damage repair. This is Ubiquitin carboxyl-terminal hydrolase 16/45 from Drosophila melanogaster (Fruit fly).